We begin with the raw amino-acid sequence, 397 residues long: MRCPKCLLCLSALLTLLGLKVYIEWTSESRLSKAYPSPRGTPPSPTPANPEPTLPANLSTRLGQTIPLPFAYWNQQQWRLGSLPSGDSTETGGCQAWGAAAATEIPDFASYPKDLRRFLLSAACRSFPQWLPGGGGSQVSSCSDTDVPYLLLAVKSEPGRFAERQAVRETWGSPAPGIRLLFLLGSPVGEAGPDLDSLVAWESRRYSDLLLWDFLDVPFNQTLKDLLLLAWLGRHCPTVSFVLRAQDDAFVHTPALLAHLRALPPASARSLYLGEVFTQAMPLRKPGGPFYVPESFFEGGYPAYASGGGYVIAGRLAPWLLRAAARVAPFPFEDVYTGLCIRALGLVPQAHPGFLTAWPADRTADHCAFRNLLLVRPLGPQASIRLWKQLQDPRLQC.

Topologically, residues 1 to 6 are cytoplasmic; the sequence is MRCPKC. The chain crosses the membrane as a helical; Signal-anchor for type II membrane protein span at residues 7-23; it reads LLCLSALLTLLGLKVYI. Residues 24–397 are Lumenal-facing; sequence EWTSESRLSK…KQLQDPRLQC (374 aa). The segment at 33–58 is disordered; that stretch reads KAYPSPRGTPPSPTPANPEPTLPANL. Positions 39–53 are enriched in pro residues; the sequence is RGTPPSPTPANPEPT. Residue asparagine 57 is glycosylated (N-linked (GlcNAc...) asparagine).

This sequence belongs to the glycosyltransferase 31 family. Interacts with B3GNT2; this interaction greatly increases B3GNT2 catalytic activity, independently of B3GNT8 enzymatic activity. As to expression, highly expressed in small intestine, pancreas, spleen, bone marrow, lung, throat, and ileum, and weakly in fetal brain, cerebellum, heart, liver, tongue, breast, uteri, and testis. Not detected in colon. Differentially expressed in human tumor cell lines.

The protein resides in the golgi apparatus membrane. It participates in protein modification; protein glycosylation. Beta-1,3-N-acetylglucosaminyltransferase that plays a role in the elongation of specific branch structures of multiantennary N-glycans. Has strong activity towards tetraantennary N-glycans and 2,6 triantennary glycans. In Homo sapiens (Human), this protein is UDP-GlcNAc:betaGal beta-1,3-N-acetylglucosaminyltransferase 8.